Consider the following 88-residue polypeptide: Small ribosomal subunit protein bS20 (88 aa).

2 disordered regions span residues 1–22 (MPNI…AQNA) and 69–88 (KNAA…GLSA).

It belongs to the bacterial ribosomal protein bS20 family.

Binds directly to 16S ribosomal RNA. The sequence is that of Small ribosomal subunit protein bS20 from Shouchella clausii (strain KSM-K16) (Alkalihalobacillus clausii).